Here is an 80-residue protein sequence, read N- to C-terminus: uncharacterized protein (80 aa).

This is an uncharacterized protein from Acidianus filamentous virus 1 (isolate United States/Yellowstone) (AFV-1).